A 486-amino-acid chain; its full sequence is NADH-quinone oxidoreductase subunit N 1 (486 aa).

Transmembrane regions (helical) follow at residues F15–I35, I46–G66, M72–L92, Y111–S128, L131–Y151, F166–L186, F208–P228, P241–L261, Q276–L296, M303–S323, M331–L351, A375–F395, I410–V432, and F455–L475.

The protein belongs to the complex I subunit 2 family. In terms of assembly, NDH-1 is composed of 14 different subunits. Subunits NuoA, H, J, K, L, M, N constitute the membrane sector of the complex.

It localises to the cell inner membrane. The enzyme catalyses a quinone + NADH + 5 H(+)(in) = a quinol + NAD(+) + 4 H(+)(out). Functionally, NDH-1 shuttles electrons from NADH, via FMN and iron-sulfur (Fe-S) centers, to quinones in the respiratory chain. The immediate electron acceptor for the enzyme in this species is believed to be ubiquinone. Couples the redox reaction to proton translocation (for every two electrons transferred, four hydrogen ions are translocated across the cytoplasmic membrane), and thus conserves the redox energy in a proton gradient. The chain is NADH-quinone oxidoreductase subunit N 1 from Solibacter usitatus (strain Ellin6076).